A 669-amino-acid polypeptide reads, in one-letter code: Thrombospondin-type laminin G domain and EAR repeat-containing protein (669 aa).

Positions 1–19 (MSALLSLCFVLPLAAPGHG) are cleaved as a signal peptide. Residues 58–277 (GLQLSVAAPR…RVTLGPQPPC (220 aa)) enclose the Laminin G-like domain. EAR repeat units follow at residues 313–358 (DYVE…KWTE), 360–408 (KFVS…KWSH), 412–460 (KFTP…KWNP), 464–506 (LFEA…VHSH), 514–570 (SFQL…ELNV), 574–622 (AFVK…RWQG), and 625–668 (GFVA…RLRT). N-linked (GlcNAc...) asparagine glycosylation is present at N320. 4 N-linked (GlcNAc...) asparagine glycosylation sites follow: N468, N497, N556, and N569.

Its subcellular location is the secreted. It is found in the cell surface. It localises to the cell projection. The protein resides in the stereocilium. Functionally, plays a critical role in tooth and hair follicle morphogenesis through regulation of the Notch signaling pathway. May play a role in development or function of the auditory system. In Homo sapiens (Human), this protein is Thrombospondin-type laminin G domain and EAR repeat-containing protein (TSPEAR).